The primary structure comprises 155 residues: Ribosome maturation factor RimP (155 aa).

This sequence belongs to the RimP family.

The protein resides in the cytoplasm. Required for maturation of 30S ribosomal subunits. This Synechococcus sp. (strain WH7803) protein is Ribosome maturation factor RimP.